The primary structure comprises 199 residues: Ribonuclease HI (199 aa).

A not required for RNase H activity region spans residues 1–68; sequence MPVVECDIQT…TAVVQPDRGG (68 aa). An RNase H type-1 domain is found at 66-197; it reads RGGRVHAYFD…ADALANEALD (132 aa). Residues 69–199 form an as active as intact RNase H region; that stretch reads RVHAYFDGAS…ALANEALDDA (131 aa). Mg(2+)-binding residues include Asp-75, Glu-115, Asp-139, and Asp-189. Residues Asp-75, Glu-115, Asp-139, and Asp-189 each contribute to the Mn(2+) site.

This sequence belongs to the RNase H family. It depends on Mn(2+) as a cofactor. Mg(2+) serves as cofactor. The cofactor is Co(2+). Ni(2+) is required as a cofactor.

It is found in the cytoplasm. It catalyses the reaction Endonucleolytic cleavage to 5'-phosphomonoester.. Its function is as follows. Nuclease that specifically degrades the RNA of RNA-DNA hybrids; seems to act exonucleolytically on RNA/DNA hybrids. Endonucleolytically removes RNA primers from the Okazaki fragments of lagging strand synthesis on its own. Complements the temperature-sensitive phenotype of an E.coli double rnhA/rnhB (RNase H) disruption mutant. The sequence is that of Ribonuclease HI (rnhA) from Halobacterium salinarum (strain ATCC 700922 / JCM 11081 / NRC-1) (Halobacterium halobium).